The following is a 412-amino-acid chain: Hyaluronidase-3 (412 aa).

The signal sequence occupies residues 1–22 (MITQLGLTLVVGLTLCLVHVQA). 5 disulfide bridges follow: C42/C332, C206/C221, C357/C368, C362/C396, and C398/C407. An N-linked (GlcNAc...) asparagine glycan is attached at N69. E129 (proton donor) is an active-site residue. N-linked (GlcNAc...) asparagine glycosylation is present at N216. Residues 353 to 408 (AATACSHQRCHGHGRCSWKDPGQMEAFLHLQPDDNLGAWKSFRCRCYLGWSGPTCL) form the EGF-like domain.

It belongs to the glycosyl hydrolase 56 family. N-glycosylated.

It localises to the secreted. It is found in the cell membrane. The protein resides in the cytoplasmic vesicle. Its subcellular location is the secretory vesicle. The protein localises to the acrosome. It localises to the endoplasmic reticulum. It is found in the early endosome. It catalyses the reaction Random hydrolysis of (1-&gt;4)-linkages between N-acetyl-beta-D-glucosamine and D-glucuronate residues in hyaluronate.. Facilitates sperm penetration into the layer of cumulus cells surrounding the egg by digesting hyaluronic acid. Involved in induction of the acrosome reaction in the sperm. Involved in follicular atresia, the breakdown of immature ovarian follicles that are not selected to ovulate. Induces ovarian granulosa cell apoptosis, possibly via apoptotic signaling pathway involving CASP8 and CASP3 activation, and poly(ADP-ribose) polymerase (PARP) cleavage. Has no hyaluronidase activity in embryonic fibroblasts in vitro. Has no hyaluronidase activity in granulosa cells in vitro. This chain is Hyaluronidase-3 (Hyal3), found in Rattus norvegicus (Rat).